The sequence spans 494 residues: tRNA-2-methylthio-N(6)-dimethylallyladenosine synthase (494 aa).

In terms of domain architecture, MTTase N-terminal spans 5 to 121 (RTYQVRTYGC…LPALLERARV (117 aa)). Cys-14, Cys-50, Cys-84, Cys-158, Cys-162, and Cys-165 together coordinate [4Fe-4S] cluster. In terms of domain architecture, Radical SAM core spans 144–374 (RESVYAAWVA…LELQERISEE (231 aa)). One can recognise a TRAM domain in the interval 377-446 (AKFVGREVEV…PHHLVADSGI (70 aa)). Residues 458–468 (WEARNAPERRP) are compositionally biased toward basic and acidic residues. The tract at residues 458 to 494 (WEARNAPERRPTGVLLGMPKVGAPEPQPSVVGGCCDS) is disordered.

It belongs to the methylthiotransferase family. MiaB subfamily. Monomer. It depends on [4Fe-4S] cluster as a cofactor.

Its subcellular location is the cytoplasm. The catalysed reaction is N(6)-dimethylallyladenosine(37) in tRNA + (sulfur carrier)-SH + AH2 + 2 S-adenosyl-L-methionine = 2-methylsulfanyl-N(6)-dimethylallyladenosine(37) in tRNA + (sulfur carrier)-H + 5'-deoxyadenosine + L-methionine + A + S-adenosyl-L-homocysteine + 2 H(+). Functionally, catalyzes the methylthiolation of N6-(dimethylallyl)adenosine (i(6)A), leading to the formation of 2-methylthio-N6-(dimethylallyl)adenosine (ms(2)i(6)A) at position 37 in tRNAs that read codons beginning with uridine. The chain is tRNA-2-methylthio-N(6)-dimethylallyladenosine synthase from Thermobifida fusca (strain YX).